The following is a 97-amino-acid chain: Large ribosomal subunit protein eL21 (97 aa).

The interval 1–24 (MQKSEGFRSKTRYKLQKHPRQKGM) is disordered. The span at 9–21 (SKTRYKLQKHPRQ) shows a compositional bias: basic residues.

Belongs to the eukaryotic ribosomal protein eL21 family.

The sequence is that of Large ribosomal subunit protein eL21 from Methanococcus maripaludis (strain DSM 14266 / JCM 13030 / NBRC 101832 / S2 / LL).